Here is a 157-residue protein sequence, read N- to C-terminus: WPP domain-containing protein 3 (157 aa).

The span at 1 to 20 shows a compositional bias: polar residues; it reads MAETADTINTTVSTPQPQLE. The interval 1-41 is disordered; the sequence is MAETADTINTTVSTPQPQLESRSDETSCLQKHRSDATSEVT. A compositionally biased stretch (basic and acidic residues) spans 32–41; it reads HRSDATSEVT. A WPP; degenerate region spans residues 37–138; the sequence is TSEVTKEEKS…IESAEVRFKA (102 aa).

As to expression, expressed in roots, stems and leaves.

Its subcellular location is the cytoplasm. The protein resides in the nucleus. In terms of biological role, regulates the mitotic activity in roots. The chain is WPP domain-containing protein 3 (WPP3) from Arabidopsis thaliana (Mouse-ear cress).